Reading from the N-terminus, the 215-residue chain is Ribonuclease (215 aa).

An N-terminal signal peptide occupies residues 1–22 (MKKIVVLLGMLLAPWFSSAVQA). Active-site residues include His-62, Glu-102, and His-106. The tract at residues 144 to 166 (KPLPAQGGSGQCQRLAGPGQHHG) is disordered.

This sequence belongs to the RNase T2 family.

The protein localises to the periplasm. It is found in the cytoplasm. One of the few RNases that cleave the phosphodiester bond between any two nucleotide. Shows a preference for adenylic acid. The sequence is that of Ribonuclease from Aeromonas hydrophila.